Here is a 305-residue protein sequence, read N- to C-terminus: Tyrosine recombinase XerC (305 aa).

The region spanning 2-88 is the Core-binding (CB) domain; the sequence is NQLELYIDTF…TLRSFYRFLE (87 aa). In terms of domain architecture, Tyr recombinase spans 109–294; that stretch reads PVPGFLYQEE…TKDHLREAYM (186 aa). Residues Arg149, Lys173, His246, Arg249, and His272 contribute to the active site. The active-site O-(3'-phospho-DNA)-tyrosine intermediate is the Tyr281.

The protein belongs to the 'phage' integrase family. XerC subfamily. In terms of assembly, forms a cyclic heterotetrameric complex composed of two molecules of XerC and two molecules of XerD.

Its subcellular location is the cytoplasm. Functionally, site-specific tyrosine recombinase, which acts by catalyzing the cutting and rejoining of the recombining DNA molecules. The XerC-XerD complex is essential to convert dimers of the bacterial chromosome into monomers to permit their segregation at cell division. It also contributes to the segregational stability of plasmids. The polypeptide is Tyrosine recombinase XerC (Oceanobacillus iheyensis (strain DSM 14371 / CIP 107618 / JCM 11309 / KCTC 3954 / HTE831)).